Consider the following 116-residue polypeptide: Putative serine proteinase inhibitor 2 homolog first part (116 aa).

This sequence belongs to the serpin family. Poxviruses subfamily.

The protein is Putative serine proteinase inhibitor 2 homolog first part of Vaccinia virus (strain Copenhagen) (VACV).